The sequence spans 443 residues: Probable D-serine dehydratase (443 aa).

K118 is modified (N6-(pyridoxal phosphate)lysine).

This sequence belongs to the serine/threonine dehydratase family. DsdA subfamily. It depends on pyridoxal 5'-phosphate as a cofactor.

The enzyme catalyses D-serine = pyruvate + NH4(+). This is Probable D-serine dehydratase from Vibrio parahaemolyticus serotype O3:K6 (strain RIMD 2210633).